Consider the following 852-residue polypeptide: G-type lectin S-receptor-like serine/threonine-protein kinase At4g03230 (852 aa).

Residues 1–19 form the signal peptide; sequence MILSVFFYMFLLHIRRLDC. One can recognise a Bulb-type lectin domain in the interval 20 to 154; sequence FVAVQDSKTL…GNEANVVWQS (135 aa). At 20–444 the chain is on the extracellular side; it reads FVAVQDSKTL…RGRGRYGEAK (425 aa). 6 N-linked (GlcNAc...) asparagine glycosylation sites follow: Asn37, Asn59, Asn171, Asn187, Asn234, and Asn243. In terms of domain architecture, EGF-like spans 285 to 321; it reads PRDECSVYNACGNFGSCNSKNEEMCKCLPGFRPNFLE. 2 disulfides stabilise this stretch: Cys289–Cys301 and Cys295–Cys309. Residues 339–426 enclose the PAN domain; the sequence is CGKDGVVVGD…SRNVFIRVAV (88 aa). N-linked (GlcNAc...) asparagine glycosylation is present at Asn352. 2 disulfides stabilise this stretch: Cys373–Cys400 and Cys377–Cys383. Residues 445–465 traverse the membrane as a helical segment; that stretch reads TPVVLIIVVTFTSAAILVVLS. Over 466–852 the chain is Cytoplasmic; that stretch reads STASYVFLQR…ELTITLEDGR (387 aa). Residues 532 to 819 enclose the Protein kinase domain; that stretch reads FSNANKLGQG…TLPTPKQPAF (288 aa). ATP contacts are provided by residues 538–546 and Lys560; that span reads LGQGGFGPV. Phosphoserine is present on Ser566. The tract at residues 621-638 is caM-binding; sequence KLCQRLDWKMRCNIILGI. Asp657 serves as the catalytic Proton acceptor. Phosphoserine occurs at positions 661 and 674. Phosphothreonine is present on Thr691. The disordered stretch occupies residues 826-852; the sequence is SSSKASSSTKPETCSENELTITLEDGR. Phosphoserine is present on residues Ser831 and Ser840. A compositionally biased stretch (polar residues) spans 834 to 845; it reads TKPETCSENELT. Residue Thr847 is modified to Phosphothreonine.

Belongs to the protein kinase superfamily. Ser/Thr protein kinase family.

The protein localises to the cell membrane. The enzyme catalyses L-seryl-[protein] + ATP = O-phospho-L-seryl-[protein] + ADP + H(+). It carries out the reaction L-threonyl-[protein] + ATP = O-phospho-L-threonyl-[protein] + ADP + H(+). The chain is G-type lectin S-receptor-like serine/threonine-protein kinase At4g03230 from Arabidopsis thaliana (Mouse-ear cress).